A 285-amino-acid chain; its full sequence is 33 kDa chaperonin (285 aa).

Cystine bridges form between cysteine 228–cysteine 230 and cysteine 261–cysteine 264.

The protein belongs to the HSP33 family. Post-translationally, under oxidizing conditions two disulfide bonds are formed involving the reactive cysteines. Under reducing conditions zinc is bound to the reactive cysteines and the protein is inactive.

The protein resides in the cytoplasm. Its function is as follows. Redox regulated molecular chaperone. Protects both thermally unfolding and oxidatively damaged proteins from irreversible aggregation. Plays an important role in the bacterial defense system toward oxidative stress. The polypeptide is 33 kDa chaperonin (Hahella chejuensis (strain KCTC 2396)).